Reading from the N-terminus, the 441-residue chain is MKAAVDLKPTLTIIKTEKVDIDLFPSPDMECADVPLLTPSSKEMMSQALKATFSGFAKEQQRLGIPKDPQQWTETHVRDWVMWAVNEFSLKGVDFQKFCMNGAALCALGKECFLELRPDFVGDILWEHLEILQKEEAKPYPANGVNAAYPESRYTSDYFISYGIEHAQCVPPSEFSEPSFITESYQTLHPISSEELLSLKYENDYPSVILRDPVQTDSLQTDYFTIKQEVVTPDNMCMGRASRGKLGGQDSFESIESYDSCDRLTQSWSSQSSFQSLQRVPSYDSFDSEDYPAALPNHKPKGTFKDYVRDRADMNKDKPVIPAAALAGYTGSGPIQLWQFLLELLTDKSCQSFISWTGDGWEFKLSDPDEVARRWGKRKNKPKMNYEKLSRGLRYYYDKNIIHKTAGKRYVYRFVCDLQSLLGYTPEELHAMLDVKPDADE.

Residues 51 to 136 (ATFSGFAKEQ…EHLEILQKEE (86 aa)) form the PNT domain. Residues 130–243 (EILQKEEAKP…DNMCMGRASR (114 aa)) form an activation domain; required for transcription activation region. Positions 304–312 (FKDYVRDRA) are helix HI-1. Residues 323–330 (AAALAGYT) are helix HI-2. Residues 335 to 415 (IQLWQFLLEL…AGKRYVYRFV (81 aa)) constitute a DNA-binding region (ETS). The segment at 418–422 (LQSLL) is helix H4. The segment at 426-432 (PEELHAM) is helix H5.

It belongs to the ETS family. Binds DNA as a homodimer; homodimerization is required for transcription activation.

The protein resides in the nucleus. The protein localises to the cytoplasm. With respect to regulation, autoinhibited by a module composed of four alpha helices (HI-1, HI-2, H4, and H5) that flank the DNA-binding ETS domain, reducing the affinity for DNA. Functionally, transcription factor. Directly controls the expression of cytokine and chemokine genes in a wide variety of different cellular contexts. The protein is Transforming protein p54/c-ets-1 (ETS1) of Gallus gallus (Chicken).